A 710-amino-acid chain; its full sequence is Early transcription factor 82 kDa subunit (710 aa).

It belongs to the poxviridae VETF large subunit family. In terms of assembly, heterodimer of a 70 kDa and a 82 kDa subunit. Part of the early transcription complex composed of ETF, RAP94/OPG109, and the DNA-directed RNA polymerase.

It localises to the virion. Its function is as follows. Acts with RNA polymerase to initiate transcription from early gene promoters. Is recruited by the RPO-associated protein of 94 kDa RAP94/OPG109 to form the early transcription complex, which also contains the core RNA polymerase. ETF heterodimer binds to early gene promoters. This Homo sapiens (Human) protein is Early transcription factor 82 kDa subunit (OPG133).